The sequence spans 241 residues: Translation initiation factor IF-3 (241 aa).

Over residues 193 to 203 (AAEKARQKAIQ) the composition is skewed to basic and acidic residues. Residues 193–241 (AAEKARQKAIQEGRAAPAQDDTEDEEIEKLERELEEQDDEDDDEAEATE) are disordered. Acidic residues predominate over residues 212–241 (DDTEDEEIEKLERELEEQDDEDDDEAEATE).

This sequence belongs to the IF-3 family. In terms of assembly, monomer.

The protein localises to the cytoplasm. IF-3 binds to the 30S ribosomal subunit and shifts the equilibrium between 70S ribosomes and their 50S and 30S subunits in favor of the free subunits, thus enhancing the availability of 30S subunits on which protein synthesis initiation begins. The sequence is that of Translation initiation factor IF-3 from Sorangium cellulosum (strain So ce56) (Polyangium cellulosum (strain So ce56)).